The following is a 1123-amino-acid chain: Leucine-rich repeat receptor-like protein kinase PEPR1 (1123 aa).

The first 28 residues, 1–28, serve as a signal peptide directing secretion; sequence MKNLGGLFKILLLFFCLFLSTHIISVSC. At 29-769 the chain is on the extracellular side; sequence LNSDGLTLLS…SRKSGLSTWQ (741 aa). One copy of the LRR 1 repeat lies at 31-53; that stretch reads SDGLTLLSLLKHLDRVPPQVTST. 4 N-linked (GlcNAc...) asparagine glycosylation sites follow: N57, N81, N110, and N121. LRR repeat units follow at residues 74–98, 99–122, 124–145, 146–170, 171–194, 196–218, and 219–243; these read SKNV…IGEL, KSLQ…LGNC, KLAT…TLDS, LKRL…LFRI, PKLQ…IGDA, ELVE…IGNS, and SSLQ…NLLG. Residues N182 and N217 are each glycosylated (N-linked (GlcNAc...) asparagine). N244, N252, N289, N302, N316, N321, and N337 each carry an N-linked (GlcNAc...) asparagine glycan. LRR repeat units lie at residues 245–266, 267–290, 292–314, 315–338, 340–362, 363–386, 388–410, 412–434, 435–458, 459–482, 484–505, 506–529, 530–553, 554–577, 579–600, 601–625, 626–650, 652–674, 675–696, and 697–721; these read LTTL…SPNC, KNLL…LGNC, SLDA…LGML, KNLT…LGNC, SLNL…LGKL, RKLE…IWKS, SLTQ…MTEM, KLKI…LGVN, SSLE…LCHG, RKLR…IGHC, TIRR…FSQD, HSLS…LGSC, KNLS…LGNL, QNLG…LSNC, SLER…NFSN, WKGL…LPEL, KKLS…GLIE, LIYD…LGDL, IKLT…VLKG, and LTSL…LEGQ. 3 N-linked (GlcNAc...) asparagine glycosylation sites follow: N398, N420, and N434. N-linked (GlcNAc...) asparagine glycosylation is present at N494. N-linked (GlcNAc...) asparagine glycans are attached at residues N531, N536, N560, N591, and N597. N-linked (GlcNAc...) asparagine glycans are attached at residues N681 and N686. N745 carries an N-linked (GlcNAc...) asparagine glycan. The chain crosses the membrane as a helical span at residues 770–790; it reads IVLIAVLSSLLVLVVVLALVF. Topologically, residues 791 to 1123 are cytoplasmic; it reads ICLRRRKGRP…ARSCSSDSVR (333 aa). Phosphothreonine is present on T824. Residues 827–1115 enclose the Protein kinase domain; that stretch reads LNEKYTIGRG…LLEDVKHLAR (289 aa). ATP-binding positions include 833–841 and K855; that span reads IGRGAHGIV. A phosphotyrosine mark is found at Y901 and Y941. The active-site Proton acceptor is the D954. At Y995 the chain carries Phosphotyrosine.

It belongs to the protein kinase superfamily. Ser/Thr protein kinase family. In terms of assembly, interacts with PEP1 and BAK1. Interacts with BIK1 and PBL1. Post-translationally, N-glycosylated.

The protein resides in the cell membrane. It carries out the reaction L-seryl-[protein] + ATP = O-phospho-L-seryl-[protein] + ADP + H(+). It catalyses the reaction L-threonyl-[protein] + ATP = O-phospho-L-threonyl-[protein] + ADP + H(+). Acts as a receptor for PEP defense peptides. Unlike typical immune receptors, senses an endogenous elicitor that potentiates pathogen-associated molecular pattern (PAMP)-inducible plant responses. Involved in PAMP-triggered immunity (PTI) signaling. Interacts with and phosphorylates the kinase BIK1, a central rate-limiting kinase in PTI signaling. In Arabidopsis thaliana (Mouse-ear cress), this protein is Leucine-rich repeat receptor-like protein kinase PEPR1 (PEPR1).